We begin with the raw amino-acid sequence, 491 residues long: Ketol-acid reductoisomerase (NADP(+)) (491 aa).

Positions 15–208 constitute a KARI N-terminal Rossmann domain; the sequence is AQLGKCRFMG…GGHRAGVLES (194 aa). Residues 45 to 48, arginine 68, arginine 76, serine 78, and 108 to 110 each bind NADP(+); these read CGAQ and DKQ. Histidine 132 is an active-site residue. Glycine 158 is a binding site for NADP(+). 2 KARI C-terminal knotted domains span residues 209–344 and 345–484; these read SFVA…TAPQ and YEGK…MTDM. Mg(2+) is bound by residues aspartate 217, glutamate 221, glutamate 389, and glutamate 393. Serine 414 is a binding site for substrate.

The protein belongs to the ketol-acid reductoisomerase family. Mg(2+) is required as a cofactor.

The catalysed reaction is (2R)-2,3-dihydroxy-3-methylbutanoate + NADP(+) = (2S)-2-acetolactate + NADPH + H(+). It carries out the reaction (2R,3R)-2,3-dihydroxy-3-methylpentanoate + NADP(+) = (S)-2-ethyl-2-hydroxy-3-oxobutanoate + NADPH + H(+). It functions in the pathway amino-acid biosynthesis; L-isoleucine biosynthesis; L-isoleucine from 2-oxobutanoate: step 2/4. The protein operates within amino-acid biosynthesis; L-valine biosynthesis; L-valine from pyruvate: step 2/4. In terms of biological role, involved in the biosynthesis of branched-chain amino acids (BCAA). Catalyzes an alkyl-migration followed by a ketol-acid reduction of (S)-2-acetolactate (S2AL) to yield (R)-2,3-dihydroxy-isovalerate. In the isomerase reaction, S2AL is rearranged via a Mg-dependent methyl migration to produce 3-hydroxy-3-methyl-2-ketobutyrate (HMKB). In the reductase reaction, this 2-ketoacid undergoes a metal-dependent reduction by NADPH to yield (R)-2,3-dihydroxy-isovalerate. This is Ketol-acid reductoisomerase (NADP(+)) from Klebsiella pneumoniae (strain 342).